Here is a 597-residue protein sequence, read N- to C-terminus: Indole-3-acetic acid-amido synthetase GH3.4 (597 aa).

Belongs to the IAA-amido conjugating enzyme family.

In terms of biological role, catalyzes the synthesis of indole-3-acetic acid (IAA)-amino acid conjugates, providing a mechanism for the plant to cope with the presence of excess auxin. Strongly reactive with Glu, Gln, Trp, Asp, Ala, Leu, Phe, Gly, Tyr, Met, Ile and Val. Little or no product formation with His, Ser, Thr, Arg, Lys, or Cys. Also active on pyruvic and butyric acid analogs of IAA, PAA and the synthetic auxin naphthaleneacetic acid (NAA). The two chlorinated synthetic auxin herbicides 2,4-D and 3,6-dichloro-o-anisic acid (dicamba) cannot be used as substrates. This Arabidopsis thaliana (Mouse-ear cress) protein is Indole-3-acetic acid-amido synthetase GH3.4 (GH3.4).